Here is a 354-residue protein sequence, read N- to C-terminus: tRNA N6-adenosine threonylcarbamoyltransferase (354 aa).

The a divalent metal cation site is built by His-121, His-125, and Tyr-142. Residues Tyr-142 to Gly-146, Asp-174, Gly-189, Glu-193, and Asn-285 each bind substrate. Asp-313 serves as a coordination point for a divalent metal cation.

Belongs to the KAE1 / TsaD family. As to quaternary structure, component of the EKC/KEOPS complex composed of at least bud32, cgi121, gon7, kae1 and pcc1; the whole complex dimerizes. A divalent metal cation is required as a cofactor.

It localises to the cytoplasm. Its subcellular location is the nucleus. It carries out the reaction L-threonylcarbamoyladenylate + adenosine(37) in tRNA = N(6)-L-threonylcarbamoyladenosine(37) in tRNA + AMP + H(+). Its function is as follows. Component of the EKC/KEOPS complex that is required for the formation of a threonylcarbamoyl group on adenosine at position 37 (t(6)A37) in tRNAs that read codons beginning with adenine. The complex is probably involved in the transfer of the threonylcarbamoyl moiety of threonylcarbamoyl-AMP (TC-AMP) to the N6 group of A37. Kae1 likely plays a direct catalytic role in this reaction, but requires other protein(s) of the complex to fulfill this activity. The EKC/KEOPS complex also promotes both telomere uncapping and telomere elongation. The complex is required for efficient recruitment of transcriptional coactivators. This Neurospora crassa (strain ATCC 24698 / 74-OR23-1A / CBS 708.71 / DSM 1257 / FGSC 987) protein is tRNA N6-adenosine threonylcarbamoyltransferase (gpe-1).